The chain runs to 108 residues: Insulin-like peptide 17 (108 aa).

The signal sequence occupies residues 1 to 19; that stretch reads MFSTRGVLLLLSLMAAVAA.

This sequence belongs to the insulin family. Expressed in head neurons and the uterus.

It is found in the secreted. Involved in the regulation of the larval diapause. This chain is Insulin-like peptide 17, found in Caenorhabditis elegans.